The chain runs to 64 residues: Chassatide C7 (64 aa).

A propeptide spans 1 to 35 (VLVASLVMLEAQSSDTIQVPDWGKRLLMNHDSNRV) (removed in mature form). Intrachain disulfides connect cysteine 39-cysteine 55, cysteine 43-cysteine 57, and cysteine 48-cysteine 62.

As to expression, expressed in fruit, pedicel, root and stem but not in leaf (at protein level).

Its function is as follows. Probably participates in a plant defense mechanism. Active against E.coli ATTC25922 but not against S.aureus ATCC 12600 or S.epidermidis ATCC 14990. Has cytotoxic and hemolytic activity. This is Chassatide C7 from Chassalia chartacea (Chassalia curviflora).